The chain runs to 123 residues: Small ribosomal subunit protein uS13c (123 aa).

Positions 99–123 (GQRTRSNARTRRGAKKTVAGKKLAK) are disordered. Over residues 100-123 (QRTRSNARTRRGAKKTVAGKKLAK) the composition is skewed to basic residues.

Belongs to the universal ribosomal protein uS13 family. As to quaternary structure, part of the 30S ribosomal subunit.

Its subcellular location is the plastid. It is found in the chloroplast. Functionally, located at the top of the head of the 30S subunit, it contacts several helices of the 16S rRNA. The protein is Small ribosomal subunit protein uS13c of Cyanidioschyzon merolae (strain NIES-3377 / 10D) (Unicellular red alga).